The chain runs to 572 residues: Phosphoenolpyruvate-protein phosphotransferase (572 aa).

H191 serves as the catalytic Tele-phosphohistidine intermediate. R298 and R334 together coordinate phosphoenolpyruvate. Positions 433 and 457 each coordinate Mg(2+). Phosphoenolpyruvate contacts are provided by residues 456 to 457 and R467; that span reads ND. C504 functions as the Proton donor in the catalytic mechanism.

Belongs to the PEP-utilizing enzyme family. In terms of assembly, homodimer. The cofactor is Mg(2+).

The protein localises to the cytoplasm. It catalyses the reaction L-histidyl-[protein] + phosphoenolpyruvate = N(pros)-phospho-L-histidyl-[protein] + pyruvate. General (non sugar-specific) component of the phosphoenolpyruvate-dependent sugar phosphotransferase system (sugar PTS). This major carbohydrate active-transport system catalyzes the phosphorylation of incoming sugar substrates concomitantly with their translocation across the cell membrane. Enzyme I transfers the phosphoryl group from phosphoenolpyruvate (PEP) to the phosphoryl carrier protein (HPr). The protein is Phosphoenolpyruvate-protein phosphotransferase (ptsI) of Staphylococcus aureus (strain COL).